Here is a 372-residue protein sequence, read N- to C-terminus: Tryptophan--tRNA ligase (372 aa).

The 'HIGH' region signature appears at 79 to 87 (PSGKFHFGH). The tract at residues 247 to 268 (KLQPGLDGRKMSSSRPDSTIFL) is disordered. Positions 256 to 260 (KMSSS) match the 'KMSKS' region motif. Polar residues predominate over residues 257-267 (MSSSRPDSTIF).

Belongs to the class-I aminoacyl-tRNA synthetase family.

The protein localises to the cytoplasm. It carries out the reaction tRNA(Trp) + L-tryptophan + ATP = L-tryptophyl-tRNA(Trp) + AMP + diphosphate + H(+). The chain is Tryptophan--tRNA ligase from Aeropyrum pernix (strain ATCC 700893 / DSM 11879 / JCM 9820 / NBRC 100138 / K1).